We begin with the raw amino-acid sequence, 256 residues long: Thiazole synthase (256 aa).

Residue lysine 96 is the Schiff-base intermediate with DXP of the active site. 1-deoxy-D-xylulose 5-phosphate is bound by residues glycine 157, 184–185 (AG), and 206–207 (NT).

The protein belongs to the ThiG family. Homotetramer. Forms heterodimers with either ThiH or ThiS.

The protein localises to the cytoplasm. It catalyses the reaction [ThiS sulfur-carrier protein]-C-terminal-Gly-aminoethanethioate + 2-iminoacetate + 1-deoxy-D-xylulose 5-phosphate = [ThiS sulfur-carrier protein]-C-terminal Gly-Gly + 2-[(2R,5Z)-2-carboxy-4-methylthiazol-5(2H)-ylidene]ethyl phosphate + 2 H2O + H(+). Its pathway is cofactor biosynthesis; thiamine diphosphate biosynthesis. In terms of biological role, catalyzes the rearrangement of 1-deoxy-D-xylulose 5-phosphate (DXP) to produce the thiazole phosphate moiety of thiamine. Sulfur is provided by the thiocarboxylate moiety of the carrier protein ThiS. In vitro, sulfur can be provided by H(2)S. This Brucella melitensis biotype 2 (strain ATCC 23457) protein is Thiazole synthase.